A 259-amino-acid chain; its full sequence is Global transcriptional regulator CodY (259 aa).

The interval 1–155 (MNLLQKTRKI…GATVVGMEIL (155 aa)) is GAF domain. Residues 203–222 (ASKIADRVGITRSVIVNALR) constitute a DNA-binding region (H-T-H motif). Ser-215 is modified (phosphoserine).

This sequence belongs to the CodY family.

The protein resides in the cytoplasm. DNA-binding global transcriptional regulator which is involved in the adaptive response to starvation and acts by directly or indirectly controlling the expression of numerous genes in response to nutrient availability. During rapid exponential growth, CodY is highly active and represses genes whose products allow adaptation to nutrient depletion. The chain is Global transcriptional regulator CodY from Geobacillus sp. (strain WCH70).